A 115-amino-acid chain; its full sequence is Somatostatin-1 (115 aa).

The signal sequence occupies residues 1 to 24; sequence MQSCRVQCALTLLSLALAINSISA. Residues 25 to 99 constitute a propeptide that is removed on maturation; sequence APTDPRLRQF…NSSPALAPRE (75 aa). The segment at 60-79 is disordered; the sequence is SQTDNEALESDDLPRGAEQD. The cysteines at positions 104 and 115 are disulfide-linked.

The protein belongs to the somatostatin family.

Its subcellular location is the secreted. Somatostatin inhibits the release of somatotropin. The polypeptide is Somatostatin-1 (sst1) (Pelophylax ridibundus (Marsh frog)).